Consider the following 190-residue polypeptide: Small ribosomal subunit protein eS7x (190 aa).

Residue Met-1 is modified to N-acetylmethionine. Positions 17–50 (TECEEQVAQALFDLENTNQELKSELKDLYINQAV) form a coiled coil.

This sequence belongs to the eukaryotic ribosomal protein eS7 family.

The protein is Small ribosomal subunit protein eS7x (RPS7C) of Arabidopsis thaliana (Mouse-ear cress).